A 555-amino-acid polypeptide reads, in one-letter code: Urocanate hydratase (555 aa).

NAD(+) contacts are provided by residues 52 to 53 (GG), Gln130, 176 to 178 (GMG), Glu196, Arg201, 242 to 243 (NA), 263 to 267 (QTSAH), 273 to 274 (YL), and Tyr322. Cys410 is a catalytic residue. Position 492 (Gly492) interacts with NAD(+).

This sequence belongs to the urocanase family. Requires NAD(+) as cofactor.

The protein localises to the cytoplasm. It carries out the reaction 4-imidazolone-5-propanoate = trans-urocanate + H2O. It functions in the pathway amino-acid degradation; L-histidine degradation into L-glutamate; N-formimidoyl-L-glutamate from L-histidine: step 2/3. Functionally, catalyzes the conversion of urocanate to 4-imidazolone-5-propionate. The polypeptide is Urocanate hydratase (Shewanella sp. (strain W3-18-1)).